Reading from the N-terminus, the 151-residue chain is MATLERKLVEMLKAPVEALGHQLWGLEYIQAGKHSILRLYIDNEKGIFIEDCAEASRQVSAVLDVEDPITSEYTLEVSSPGVERLLFTAEQYKAYIGETVKVQLTMPVAGSRNLKGTVTGVDGQMLNLSVDGNELIVALDNIRKGNLIAKF.

Belongs to the RimP family.

Its subcellular location is the cytoplasm. Required for maturation of 30S ribosomal subunits. The protein is Ribosome maturation factor RimP of Shewanella halifaxensis (strain HAW-EB4).